A 110-amino-acid polypeptide reads, in one-letter code: METLAQHRHARSSAQKVRLVADLIRGKKVSQALDILTYTNKKAAVFVKKVLESAIANAEHNDGADIDDLKVAKIFVDEGPSMKRIMPRAKGRADRILKRTSHITVVVSDR.

Belongs to the universal ribosomal protein uL22 family. Part of the 50S ribosomal subunit.

In terms of biological role, this protein binds specifically to 23S rRNA; its binding is stimulated by other ribosomal proteins, e.g. L4, L17, and L20. It is important during the early stages of 50S assembly. It makes multiple contacts with different domains of the 23S rRNA in the assembled 50S subunit and ribosome. Functionally, the globular domain of the protein is located near the polypeptide exit tunnel on the outside of the subunit, while an extended beta-hairpin is found that lines the wall of the exit tunnel in the center of the 70S ribosome. In Enterobacter sp. (strain 638), this protein is Large ribosomal subunit protein uL22.